Consider the following 427-residue polypeptide: Type II methyltransferase M1.BsuMI (427 aa).

The 344-residue stretch at 84–427 (INIADLFSGC…SYLLALHQLR (344 aa)) folds into the SAM-dependent MTase C5-type domain. Residue C176 is part of the active site.

The protein belongs to the class I-like SAM-binding methyltransferase superfamily. C5-methyltransferase family. Monomer. May form a complex with YdiP, also seems to be active alone.

It carries out the reaction a 2'-deoxycytidine in DNA + S-adenosyl-L-methionine = a 5-methyl-2'-deoxycytidine in DNA + S-adenosyl-L-homocysteine + H(+). Somewhat inhibited by MgCl(2) and spermidine, strongly inhibited by MnCl(2). Its function is as follows. A methylase, recognizes the double-stranded sequence 5'-YTCGAR-3', methylates C-3 on both strands, and protects the DNA from cleavage by the BsuMI endonuclease. The sequence is that of Type II methyltransferase M1.BsuMI (ydiO) from Bacillus subtilis (strain 168).